The following is a 185-amino-acid chain: Elongation factor P (185 aa).

It belongs to the elongation factor P family.

The protein resides in the cytoplasm. It functions in the pathway protein biosynthesis; polypeptide chain elongation. In terms of biological role, involved in peptide bond synthesis. Stimulates efficient translation and peptide-bond synthesis on native or reconstituted 70S ribosomes in vitro. Probably functions indirectly by altering the affinity of the ribosome for aminoacyl-tRNA, thus increasing their reactivity as acceptors for peptidyl transferase. This chain is Elongation factor P, found in Nitrosomonas eutropha (strain DSM 101675 / C91 / Nm57).